The chain runs to 469 residues: Sulfate adenylyltransferase subunit 1 (469 aa).

A tr-type G domain is found at 22–236 (KDMLRFLTCG…TLENIEIGND (215 aa)). Residues 31–38 (GSVDDGKS) form a G1 region. A GTP-binding site is contributed by 31-38 (GSVDDGKS). A G2 region spans residues 89–93 (GITID). A G3 region spans residues 110–113 (DTPG). Residues 110–114 (DTPGH) and 165–168 (NKMD) contribute to the GTP site. The tract at residues 165 to 168 (NKMD) is G4. The tract at residues 202-204 (SAL) is G5.

The protein belongs to the TRAFAC class translation factor GTPase superfamily. Classic translation factor GTPase family. CysN/NodQ subfamily. Heterodimer composed of CysD, the smaller subunit, and CysN.

The catalysed reaction is sulfate + ATP + H(+) = adenosine 5'-phosphosulfate + diphosphate. It participates in sulfur metabolism; hydrogen sulfide biosynthesis; sulfite from sulfate: step 1/3. With CysD forms the ATP sulfurylase (ATPS) that catalyzes the adenylation of sulfate producing adenosine 5'-phosphosulfate (APS) and diphosphate, the first enzymatic step in sulfur assimilation pathway. APS synthesis involves the formation of a high-energy phosphoric-sulfuric acid anhydride bond driven by GTP hydrolysis by CysN coupled to ATP hydrolysis by CysD. In Pseudoalteromonas atlantica (strain T6c / ATCC BAA-1087), this protein is Sulfate adenylyltransferase subunit 1.